The primary structure comprises 298 residues: Acetylglutamate kinase (298 aa).

Substrate is bound by residues 69–70 (GG), R91, and N196.

It belongs to the acetylglutamate kinase family. ArgB subfamily.

It localises to the cytoplasm. The catalysed reaction is N-acetyl-L-glutamate + ATP = N-acetyl-L-glutamyl 5-phosphate + ADP. Its pathway is amino-acid biosynthesis; L-arginine biosynthesis; N(2)-acetyl-L-ornithine from L-glutamate: step 2/4. Functionally, catalyzes the ATP-dependent phosphorylation of N-acetyl-L-glutamate. This Bradyrhizobium sp. (strain BTAi1 / ATCC BAA-1182) protein is Acetylglutamate kinase.